A 469-amino-acid polypeptide reads, in one-letter code: Transcription factor phomD' (469 aa).

The segment at residues 14 to 41 is a DNA-binding region (zn(2)-C6 fungal-type); sequence CNACNESKVRCSQRKPTCARCERNGVEC. The disordered stretch occupies residues 49–118; it reads THKDAPPISM…QQKDEAAAAA (70 aa). The span at 82–93 shows a compositional bias: polar residues; that stretch reads KANSNSSSNWHM. Positions 104 to 118 are enriched in low complexity; the sequence is QQQQQQQKDEAAAAA.

It localises to the nucleus. In terms of biological role, transcription factor; part of the gene cluster that mediates the biosynthesis of the phomopsins, a group of hexapeptide mycotoxins which infects lupins and causes lupinosis disease in livestock. May play a role in the regulation of the production of phomopsins. This chain is Transcription factor phomD', found in Diaporthe leptostromiformis (Lupinosis disease fungus).